The chain runs to 520 residues: 2-isopropylmalate synthase (520 aa).

Positions 5-267 (VIIFDTTLRD…HTNINHQEIY (263 aa)) constitute a Pyruvate carboxyltransferase domain. Mn(2+) contacts are provided by Asp14, His202, His204, and Asn238. A regulatory domain region spans residues 392-520 (RLDYFSVQSG…RLQQNNQEMV (129 aa)).

This sequence belongs to the alpha-IPM synthase/homocitrate synthase family. LeuA type 1 subfamily. In terms of assembly, homodimer. Mn(2+) is required as a cofactor.

The protein localises to the cytoplasm. The catalysed reaction is 3-methyl-2-oxobutanoate + acetyl-CoA + H2O = (2S)-2-isopropylmalate + CoA + H(+). It participates in amino-acid biosynthesis; L-leucine biosynthesis; L-leucine from 3-methyl-2-oxobutanoate: step 1/4. Functionally, catalyzes the condensation of the acetyl group of acetyl-CoA with 3-methyl-2-oxobutanoate (2-ketoisovalerate) to form 3-carboxy-3-hydroxy-4-methylpentanoate (2-isopropylmalate). The polypeptide is 2-isopropylmalate synthase (Yersinia pseudotuberculosis serotype O:1b (strain IP 31758)).